The chain runs to 361 residues: Peptide chain release factor 1 (361 aa).

The residue at position 237 (Q237) is an N5-methylglutamine. Basic and acidic residues predominate over residues 283-296 (VEDEKRRSEEESTR). The interval 283-305 (VEDEKRRSEEESTRRNLVSSGDR) is disordered.

The protein belongs to the prokaryotic/mitochondrial release factor family. Post-translationally, methylated by PrmC. Methylation increases the termination efficiency of RF1.

It is found in the cytoplasm. In terms of biological role, peptide chain release factor 1 directs the termination of translation in response to the peptide chain termination codons UAG and UAA. In Shewanella woodyi (strain ATCC 51908 / MS32), this protein is Peptide chain release factor 1.